The sequence spans 329 residues: GTP 3',8-cyclase (329 aa).

Positions 8 to 234 (AFARKFYYLR…QLRQRSDGPA (227 aa)) constitute a Radical SAM core domain. Residue R17 participates in GTP binding. Residues C24 and C28 each contribute to the [4Fe-4S] cluster site. Y30 provides a ligand contact to S-adenosyl-L-methionine. Position 31 (C31) interacts with [4Fe-4S] cluster. R68 serves as a coordination point for GTP. G72 serves as a coordination point for S-adenosyl-L-methionine. T99 contacts GTP. Residue S123 coordinates S-adenosyl-L-methionine. A GTP-binding site is contributed by K160. Residue M194 coordinates S-adenosyl-L-methionine. Residues C257 and C260 each contribute to the [4Fe-4S] cluster site. 262–264 (RLR) contacts GTP. C274 contacts [4Fe-4S] cluster.

Belongs to the radical SAM superfamily. MoaA family. In terms of assembly, monomer and homodimer. [4Fe-4S] cluster serves as cofactor.

The enzyme catalyses GTP + AH2 + S-adenosyl-L-methionine = (8S)-3',8-cyclo-7,8-dihydroguanosine 5'-triphosphate + 5'-deoxyadenosine + L-methionine + A + H(+). It participates in cofactor biosynthesis; molybdopterin biosynthesis. Its function is as follows. Catalyzes the cyclization of GTP to (8S)-3',8-cyclo-7,8-dihydroguanosine 5'-triphosphate. The polypeptide is GTP 3',8-cyclase (Shigella sonnei (strain Ss046)).